The primary structure comprises 315 residues: Protoheme IX farnesyltransferase (315 aa).

9 helical membrane-spanning segments follow: residues 34-54 (VISL…GPIN), 55-75 (PLIA…AGAI), 105-125 (ALGF…LAAN), 127-147 (LAAF…TMWL), 155-175 (IVIG…ATTG), 177-197 (LGVL…PHFW), 226-246 (WQIL…SFLH), 251-271 (LYTG…VGVL), and 294-314 (YSLA…FLIM).

It belongs to the UbiA prenyltransferase family. Protoheme IX farnesyltransferase subfamily.

It localises to the cell inner membrane. The catalysed reaction is heme b + (2E,6E)-farnesyl diphosphate + H2O = Fe(II)-heme o + diphosphate. It functions in the pathway porphyrin-containing compound metabolism; heme O biosynthesis; heme O from protoheme: step 1/1. Converts heme B (protoheme IX) to heme O by substitution of the vinyl group on carbon 2 of heme B porphyrin ring with a hydroxyethyl farnesyl side group. This is Protoheme IX farnesyltransferase from Gluconacetobacter diazotrophicus (strain ATCC 49037 / DSM 5601 / CCUG 37298 / CIP 103539 / LMG 7603 / PAl5).